A 199-amino-acid polypeptide reads, in one-letter code: Carbon disulfide hydrolase (199 aa).

3 residues coordinate Zn(2+): cysteine 36, histidine 91, and cysteine 94.

Belongs to the beta-class carbonic anhydrase family. Exists as both octamers and hexadecamers in solution. The hexadecameric homooligomer may form a catenane, through interactions of two interlocked octameric rings. It depends on Zn(2+) as a cofactor.

The enzyme catalyses carbon disulfide + 2 H2O = 2 hydrogen sulfide + CO2 + 2 H(+). It functions in the pathway sulfur metabolism; hydrogen sulfide biosynthesis. Its function is as follows. Catalyzes the conversion of carbon disulfide into hydrogen sulfide and carbon dioxide, with carbonyl sulfide as an intermediate. Likely plays a key role in sulfur metabolism that allows A.thiooxidans G8 to grow on carbon disulfide as the main carbon and energy source. Does not show carbonic anhydrase activity (hydration of CO(2) to carbonate). This is Carbon disulfide hydrolase from Acidithiobacillus thiooxidans (Thiobacillus thiooxidans).